The sequence spans 604 residues: Baculoviral IAP repeat-containing protein 3 (604 aa).

3 BIR repeats span residues 29–96 (ELYR…CRFV), 169–235 (ENAR…CPFI), and 255–322 (HAAR…CEYL). Zn(2+) contacts are provided by C292, C295, H312, and C319. Residues 439-529 (KESNDLLLIR…VLYEHLFVQQ (91 aa)) form the CARD domain. The RING-type zinc-finger motif lies at 557–592 (CKVCMDKEVSIVFIPCGHLVVCKDCAPSLRKCPICR).

It belongs to the IAP family. As to quaternary structure, interacts with PRSS25; interaction inhibits apoptotic suppressor activity. The BIR motifs region interacts with TNF receptor associated factors 1 and 2 (TRAF1 and TRAF2) to form a heteromeric complex, which is then recruited to the tumor necrosis factor receptor 2 (TNFR2). Interaction with TRAF2 is required for ubiquitination of IKBKE, degradation of NFKBIA and activation of NF-kappa-B. Interacts with RIP1, RIP2, RIP3, RIP4 and USP19. In terms of processing, auto-ubiquitinated and degraded by the proteasome in apoptotic cells. As to expression, highly expressed in fetal lung, and kidney. In the adult, expression is mainly seen in lymphoid tissues, including spleen, thymus and peripheral blood lymphocytes.

Its subcellular location is the cytoplasm. The protein localises to the nucleus. The catalysed reaction is S-ubiquitinyl-[E2 ubiquitin-conjugating enzyme]-L-cysteine + [acceptor protein]-L-lysine = [E2 ubiquitin-conjugating enzyme]-L-cysteine + N(6)-ubiquitinyl-[acceptor protein]-L-lysine.. With respect to regulation, USP19 regulates the stability of BIRC3/c-IAP2 by preventing its ubiquitination. Multi-functional protein which regulates not only caspases and apoptosis, but also modulates inflammatory signaling and immunity, mitogenic kinase signaling and cell proliferation, as well as cell invasion and metastasis. Acts as an E3 ubiquitin-protein ligase regulating NF-kappa-B signaling and regulates both canonical and non-canonical NF-kappa-B signaling by acting in opposite directions: acts as a positive regulator of the canonical pathway and suppresses constitutive activation of non-canonical NF-kappa-B signaling. The target proteins for its E3 ubiquitin-protein ligase activity include: RIPK1, RIPK2, RIPK3, RIPK4, CASP3, CASP7, CASP8, IKBKE, TRAF1, and BCL10. Acts as an important regulator of innate immune signaling via regulation of Toll-like receptors (TLRs), Nodlike receptors (NLRs) and RIG-I like receptors (RLRs), collectively referred to as pattern recognition receptors (PRRs). Protects cells from spontaneous formation of the ripoptosome, a large multi-protein complex that has the capability to kill cancer cells in a caspase-dependent and caspase-independent manner. Suppresses ripoptosome formation by ubiquitinating RIPK1 and CASP8. This Homo sapiens (Human) protein is Baculoviral IAP repeat-containing protein 3 (BIRC3).